Consider the following 513-residue polypeptide: Sphingolipid C9-methyltransferase 1 (513 aa).

Transmembrane regions (helical) follow at residues 63 to 83 (FLVA…GGGL) and 85 to 105 (TAIF…WTVM). S-adenosyl-L-methionine contacts are provided by residues 228–229 (YT), 265–273 (LLDIGCGWG), 291–296 (TLARNQ), and 321–322 (YR).

The protein belongs to the CFA/CMAS family.

Its subcellular location is the membrane. The catalysed reaction is a (4E,8E)-4-sphinga-4,8-dienine ceramide + S-adenosyl-L-methionine = a 9-methyl-(4E,8E)-sphinga-4,8-dienine ceramide + S-adenosyl-L-homocysteine + H(+). Its pathway is lipid metabolism; sphingolipid metabolism. Functionally, catalyzes methylation of the sphingoid base component of glucosylceramides (GluCers) at the C9-position. Sphingolipid C9-methylation requires 4,8-desaturated ceramides as substrates. Glucosylceramides play important roles in the growth, differentiation and pathogenicity. The methyl group at the C9-position distinguishes fungal glucosylceramides from those of plants and animals, and may thus play a role in host-pathogen interactions enabling the host to recognize the fungal attack and initiate specific defense responses. However, C-9 methylation of GlcCers is not essential for the sensitivity of F.graminearum to plant defensins MsDef1 and RsAFP2. The chain is Sphingolipid C9-methyltransferase 1 from Gibberella zeae (strain ATCC MYA-4620 / CBS 123657 / FGSC 9075 / NRRL 31084 / PH-1) (Wheat head blight fungus).